A 112-amino-acid chain; its full sequence is Nucleoid-associated protein BCI_0116 (112 aa).

Belongs to the YbaB/EbfC family. Homodimer.

It is found in the cytoplasm. The protein localises to the nucleoid. In terms of biological role, binds to DNA and alters its conformation. May be involved in regulation of gene expression, nucleoid organization and DNA protection. The polypeptide is Nucleoid-associated protein BCI_0116 (Baumannia cicadellinicola subsp. Homalodisca coagulata).